Here is a 271-residue protein sequence, read N- to C-terminus: MVSYGSHSSEVSKVLKTPKFVLRYGNVSSKQRFALKRKINYKLRESKYQEYLNEYNTFVLYDWENSGAGSLVDSSYNLPSLWKEFITEGISKGAINDKLPTVFMKRKLTNSALGHCLGLDFLTDPSESEHEYRCMFQTVQDIPSLSQLILFNSMPNVPVRLKLHTIGININFGCKRSLISNGGDQDTEMSEAVSYIQPLLEESSRMYRNLNYWKLLKIARNNKKDEPLDQSTRIKSQVKLLLSQLATNRITSPSVTDHGGHNWLIFTRRRL.

The protein localises to the mitochondrion. In terms of biological role, involved in 5'-end processing of mitochondrial COB, 15S rRNA, and RPM1 transcript. May also have a role in 3'-end processing of the COB pre-mRNA. The protein is Cytochrome b termination protein 1 (CBT1) of Saccharomyces cerevisiae (strain ATCC 204508 / S288c) (Baker's yeast).